The following is a 603-amino-acid chain: Sesquiterpene synthase Cad (603 aa).

Over residues 1–13 (MAEVGLSQNSYAS) the composition is skewed to polar residues. Residues 1-23 (MAEVGLSQNSYASANHDKKSEQQ) form a disordered region. Mg(2+) is bound by residues D357, D361, D498, and E506. The short motif at 357–361 (DDIFD) is the DDXXD motif element.

It belongs to the terpene synthase family. Tpsa subfamily. It depends on Mg(2+) as a cofactor. Mn(2+) serves as cofactor. As to expression, mostly expressed in leaves and, to a lower extent, in stems and xylem.

It carries out the reaction (2E,6E)-farnesyl diphosphate = beta-cadinene + diphosphate. It participates in secondary metabolite biosynthesis; terpenoid biosynthesis. Functionally, sesquiterpene synthase involved in the biosynthesis of volatile compounds. Mediates the conversion of (2E,6E)-farnesyl diphosphate (FPP) into beta-cadinene. Not active with geranyl diphosphate (GPP) and geranylgeranyl diphosphate (GGPP) as substrates. The sequence is that of Sesquiterpene synthase Cad from Chamaecyparis formosensis (Formosan cypress).